The following is a 120-amino-acid chain: Seripauperin-6 (120 aa).

The N-terminal stretch at 1 to 20 (MVKLTSIAAGVAAIAATASA) is a signal peptide.

Belongs to the SRP1/TIP1 family. Seripauperin subfamily.

The sequence is that of Seripauperin-6 (PAU6) from Saccharomyces cerevisiae (strain ATCC 204508 / S288c) (Baker's yeast).